Consider the following 148-residue polypeptide: MNFSFVPLFLVTLILLGVVSNNNSITVSATILLLMQQTALVQFVPLVEKHGLNLGIILLTIGVLSPLVSGKAQVPPVAEFLNFKMISAVFIGIFVAWLAGCGVPLMGRQPVLVTGLLIGTVIGVAFMGGIPVGPLIAADILSFVAGKV.

4 helical membrane passes run 10-32, 50-70, 85-105, and 116-136; these read LVTL…ATIL, HGLN…LVSG, MISA…GVPL, and LLIG…GPLI.

The protein belongs to the UPF0756 family.

It localises to the cell membrane. The sequence is that of UPF0756 membrane protein NGK_2061 from Neisseria gonorrhoeae (strain NCCP11945).